Here is a 481-residue protein sequence, read N- to C-terminus: Sphingosine kinase 2 (481 aa).

The DAGKc domain occupies 111 to 253; that stretch reads GRPKRLLVFV…VDVATIAQGN (143 aa). ATP contacts are provided by residues 121–123 and T153; that span reads NPF. Position 178 to 181 (178 to 181) interacts with substrate; it reads SGDG. D180 serves as the catalytic Proton donor/acceptor. Residues E185 and 210–212 contribute to the ATP site; that span reads GTG. Substrate is bound at residue D271. ATP contacts are provided by residues R278, R284, and 441–443; that span reads DGE.

It depends on Mg(2+) as a cofactor. As to expression, highly expressed in flowers and siliques and at lower levels in roots, leaves and stems.

The protein resides in the vacuole membrane. It catalyses the reaction a sphingoid base + ATP = a sphingoid 1-phosphate + ADP + H(+). With respect to regulation, activated by phosphatidic acid (PA). Binding with PA stimulates the activity by promoting the binding of substrate to the catalytic site. Involved in the production of sphingolipid metabolites. Phosphorylates sphingosine and various l sphingoid long-chain base (LCB) products, such as phytosphingosine (PHS, 4-hydroxysphinganine), 4-hydroxy-8-sphingenine, 4,8-sphingadienine and D-erythro-dihydrosphingosine, but has a very few activity toward D,L-threo- dihydrosphingosine. Is required for abscisic acid (ABA) signaling that mediates stomatal closure, inhibition of seed germination and root elongation. May function upstream of PLDALPHA1 and phosphatidic acid (PA) in an amplification response to ABA that mediates stomatal closure. The sequence is that of Sphingosine kinase 2 (SPHK2) from Arabidopsis thaliana (Mouse-ear cress).